The following is a 299-amino-acid chain: Protease HtpX homolog (299 aa).

2 helical membrane passes run 15–35 and 37–57; these read MFLT…VLWQ and GVSY…QYYF. His-140 is a Zn(2+) binding site. Glu-141 is an active-site residue. A Zn(2+)-binding site is contributed by His-144. A run of 2 helical transmembrane segments spans residues 158 to 178 and 187 to 207; these read FFAT…GAFG and NNIM…YFLI. Position 215 (Glu-215) interacts with Zn(2+).

Belongs to the peptidase M48B family. Zn(2+) is required as a cofactor.

It is found in the cell membrane. The sequence is that of Protease HtpX homolog from Moorella thermoacetica (strain ATCC 39073 / JCM 9320).